We begin with the raw amino-acid sequence, 292 residues long: tRNA-cytidine(32) 2-sulfurtransferase (292 aa).

The PP-loop motif signature appears at 62 to 67 (SGGKDS). C137, C140, and C228 together coordinate [4Fe-4S] cluster.

Belongs to the TtcA family. In terms of assembly, homodimer. Requires Mg(2+) as cofactor. It depends on [4Fe-4S] cluster as a cofactor.

The protein localises to the cytoplasm. It catalyses the reaction cytidine(32) in tRNA + S-sulfanyl-L-cysteinyl-[cysteine desulfurase] + AH2 + ATP = 2-thiocytidine(32) in tRNA + L-cysteinyl-[cysteine desulfurase] + A + AMP + diphosphate + H(+). The protein operates within tRNA modification. Functionally, catalyzes the ATP-dependent 2-thiolation of cytidine in position 32 of tRNA, to form 2-thiocytidine (s(2)C32). The sulfur atoms are provided by the cysteine/cysteine desulfurase (IscS) system. In Brucella anthropi (strain ATCC 49188 / DSM 6882 / CCUG 24695 / JCM 21032 / LMG 3331 / NBRC 15819 / NCTC 12168 / Alc 37) (Ochrobactrum anthropi), this protein is tRNA-cytidine(32) 2-sulfurtransferase.